Reading from the N-terminus, the 193-residue chain is uncharacterized protein (193 aa).

The N-terminal stretch at 1–26 (MRNVFVGALCMCGMSFVFSDSVRSAA) is a signal peptide.

This is an uncharacterized protein from Treponema pallidum (strain Nichols).